We begin with the raw amino-acid sequence, 425 residues long: Enolase 2 (425 aa).

Position 163 (Gln-163) interacts with (2R)-2-phosphoglycerate. Glu-205 acts as the Proton donor in catalysis. Residues Asp-242, Glu-285, and Asp-312 each contribute to the Mg(2+) site. Residues Lys-337, Arg-366, Ser-367, and Lys-388 each coordinate (2R)-2-phosphoglycerate. Lys-337 acts as the Proton acceptor in catalysis.

Belongs to the enolase family. The cofactor is Mg(2+).

The protein resides in the cytoplasm. The protein localises to the secreted. Its subcellular location is the cell surface. The enzyme catalyses (2R)-2-phosphoglycerate = phosphoenolpyruvate + H2O. The protein operates within carbohydrate degradation; glycolysis; pyruvate from D-glyceraldehyde 3-phosphate: step 4/5. Its function is as follows. Catalyzes the reversible conversion of 2-phosphoglycerate (2-PG) into phosphoenolpyruvate (PEP). It is essential for the degradation of carbohydrates via glycolysis. The sequence is that of Enolase 2 from Cupriavidus metallidurans (strain ATCC 43123 / DSM 2839 / NBRC 102507 / CH34) (Ralstonia metallidurans).